The sequence spans 60 residues: Mastoparan-D (60 aa).

Residues 1–27 form the signal peptide; sequence MKNTILILFTAFIALLGFFGMSAEALA. AXPX repeat units lie at residues 27-30, 31-34, 35-38, and 41-44; these read ADPI, ADPV, AGPN, and ADPE. A propeptide spanning residues 28–45 is cleaved from the precursor; sequence DPIADPVAGPNPEADPEA. At Leu59 the chain carries Leucine amide.

It belongs to the MCD family. Mastoparan subfamily. As to expression, expressed by the venom gland.

The protein resides in the secreted. The protein localises to the target cell membrane. Antimicrobial and mast cell degranulating peptide. Has broad spectrum antibacterial activity against both Gram-positive and Gram-negative bacteria (S.aureus MIC=24-32 ug/ml, S.xylosus MIC=2 ug/ml, S.alactolyticus MIC=16 ug/ml, C.koseri MIC=4 ug/ml, E.coli MIC=8 ug/ml, K.pneumoniae MIC=32 ug/ml, P.aerugiosa MIC=128 ug/ml, S.choleraesuis MIC=16 ug/ml, S.typhimurium MIC=32 ug/ml, V.parahamelytics MIC=32 ug/ml). Affects membrane permeability of E.coli. Shows hemolytic activities on sheep, chicken and human erythrocytes. Its mast cell degranulation activity may be related to the activation of G-protein coupled receptors in mast cells as well as interaction with other proteins located in cell endosomal membranes in the mast cells. The chain is Mastoparan-D from Vespa ducalis (Black-tailed hornet).